Consider the following 1123-residue polypeptide: Ubiquitin carboxyl-terminal hydrolase 36 (1123 aa).

Composition is skewed to basic and acidic residues over residues 1-19 (MPIVDKLKEALKPGRKDSA) and 69-90 (GASRHKSGDDPPARRQGSEHTY). Disordered regions lie at residues 1 to 22 (MPIVDKLKEALKPGRKDSADDG) and 67 to 95 (TEGASRHKSGDDPPARRQGSEHTYESCGD). One can recognise a USP domain in the interval 122–423 (AGLHNLGNTC…QAYVLFYLRI (302 aa)). Residue Cys131 is the Nucleophile of the active site. His382 functions as the Proton acceptor in the catalytic mechanism. Ser429 and Ser464 each carry phosphoserine. A disordered region spans residues 430-577 (PEGLISRTGS…RQGSWDSRDV (148 aa)). Over residues 491-503 (RNGSTLGLKSQNG) the composition is skewed to polar residues. Over residues 510 to 519 (PSGSPSPKLS) the composition is skewed to low complexity. Ser546 is subject to Phosphoserine. A compositionally biased stretch (low complexity) spans 557–571 (SNSNSSRSGSQRQGS). Phosphoserine is present on Ser582. The tract at residues 589 to 999 (ATANGHGLKG…ESSSCAPSAN (411 aa)) is disordered. Residues 597-609 (KGNDESAGLDRRG) are compositionally biased toward basic and acidic residues. Positions 610-623 (SSSSSPEHSASSDS) are enriched in low complexity. Residues 640-654 (SQETNCSTAGHSKTP) are compositionally biased toward polar residues. Phosphoserine is present on Ser667. Over residues 669 to 681 (VLSNTTTEPASTM) the composition is skewed to polar residues. Ser682 carries the post-translational modification Phosphoserine. Positions 687–697 (KKLALSAKKAS) are enriched in low complexity. 2 positions are modified to phosphoserine: Ser713 and Ser742. A compositionally biased stretch (polar residues) spans 773–785 (EPRSCSSISTALP). Residues 841-850 (HGKRKRKKKK) are compositionally biased toward basic residues. The segment covering 891–902 (GTQPQVNGQQVG) has biased composition (polar residues). The residue at position 952 (Ser952) is a Phosphoserine. Positions 963–975 (QETQRAVEEDGHL) are enriched in basic and acidic residues.

It belongs to the peptidase C19 family. As to quaternary structure, interacts with isoform 3 of FBXW7; the interaction inhibits MYC degradation induced by SCF(FBW7) complex. Interacts with NTRK1; USP36 does not deubiquitinate NTRK1. Interacts with NEDD4L (via domains WW1, 3 and 4); the interaction inhibits ubiquitination of, at least, NTRK1, KCNQ2 and KCNQ3 by NEDD4L. Interacts (via C-terminus) with EXOSC10 (via C-terminus); the interaction is facilitated by the association with RNA and promotes sumoylation of EXOSC10. Polyubiquitinated by NEDD4L, no effect on USP36 protein levels. Both proteins interact with and regulate each other's ubiquitination levels. As to expression, broadly expressed.

Its subcellular location is the nucleus. It is found in the nucleolus. It localises to the cytoplasm. It catalyses the reaction Thiol-dependent hydrolysis of ester, thioester, amide, peptide and isopeptide bonds formed by the C-terminal Gly of ubiquitin (a 76-residue protein attached to proteins as an intracellular targeting signal).. Deubiquitinase essential for the regulation of nucleolar structure and function. Required for cell and organism viability. Plays an important role in ribosomal RNA processing and protein synthesis, which is mediated, at least in part, through deubiquitination of DHX33, NPM1 and FBL, regulating their protein stability. Functions as a transcriptional repressor by deubiquiting histone H2B at the promoters of genes critical for cellular differentiation, such as CDKN1A, thereby preventing histone H3 'Lys-4' trimethylation (H3K4). Specifically deubiquitinates MYC in the nucleolus, leading to prevent MYC degradation by the proteasome: acts by specifically interacting with isoform 3 of FBXW7 (FBW7gamma) in the nucleolus and counteracting ubiquitination of MYC by the SCF(FBW7) complex. In contrast, it does not interact with isoform 1 of FBXW7 (FBW7alpha) in the nucleoplasm. Interacts to and regulates the actions of E3 ubiquitin-protein ligase NEDD4L over substrates such as NTRK1, KCNQ2 and KCNQ3, affecting their expression an functions. Deubiquitinates SOD2, regulates SOD2 protein stability. Deubiquitinase activity is required to control selective autophagy activation by ubiquitinated proteins. Promotes CEP63 stabilization through 'Lys-48'-linked deubiquitination leading to increased stability. Acts as a SUMO ligase to promote EXOSC10 sumoylation critical for the nucleolar RNA exosome function in rRNA processing. Binds to pre-rRNAs. This is Ubiquitin carboxyl-terminal hydrolase 36 from Homo sapiens (Human).